Reading from the N-terminus, the 355-residue chain is S-adenosylmethionine:tRNA ribosyltransferase-isomerase (355 aa).

It belongs to the QueA family. In terms of assembly, monomer.

It is found in the cytoplasm. The catalysed reaction is 7-aminomethyl-7-carbaguanosine(34) in tRNA + S-adenosyl-L-methionine = epoxyqueuosine(34) in tRNA + adenine + L-methionine + 2 H(+). It participates in tRNA modification; tRNA-queuosine biosynthesis. Functionally, transfers and isomerizes the ribose moiety from AdoMet to the 7-aminomethyl group of 7-deazaguanine (preQ1-tRNA) to give epoxyqueuosine (oQ-tRNA). The chain is S-adenosylmethionine:tRNA ribosyltransferase-isomerase from Jannaschia sp. (strain CCS1).